The sequence spans 769 residues: Homoaconitase, mitochondrial (769 aa).

The transit peptide at 1-28 directs the protein to the mitochondrion; the sequence is MQSRLLPSGPGRRWISLRVPNTPQRRAF. [4Fe-4S] cluster-binding residues include C391, C460, and C463.

This sequence belongs to the aconitase/IPM isomerase family. [4Fe-4S] cluster serves as cofactor.

The protein resides in the mitochondrion. The enzyme catalyses (2R,3S)-homoisocitrate = cis-homoaconitate + H2O. The protein operates within amino-acid biosynthesis; L-lysine biosynthesis via AAA pathway; L-alpha-aminoadipate from 2-oxoglutarate: step 3/5. Its function is as follows. Catalyzes the reversible hydration of cis-homoaconitate to (2R,3S)-homoisocitrate, a step in the alpha-aminoadipate pathway for lysine biosynthesis. The chain is Homoaconitase, mitochondrial (lysA) from Aspergillus niger (strain ATCC MYA-4892 / CBS 513.88 / FGSC A1513).